The chain runs to 1377 residues: DNA-directed RNA polymerase subunit beta' (1377 aa).

4 residues coordinate Zn(2+): cysteine 60, cysteine 62, cysteine 75, and cysteine 78. 3 residues coordinate Mg(2+): aspartate 449, aspartate 451, and aspartate 453. The Zn(2+) site is built by cysteine 777, cysteine 851, cysteine 858, and cysteine 861.

It belongs to the RNA polymerase beta' chain family. In terms of assembly, the RNAP catalytic core consists of 2 alpha, 1 beta, 1 beta' and 1 omega subunit. When a sigma factor is associated with the core the holoenzyme is formed, which can initiate transcription. Mg(2+) is required as a cofactor. It depends on Zn(2+) as a cofactor.

The catalysed reaction is RNA(n) + a ribonucleoside 5'-triphosphate = RNA(n+1) + diphosphate. Functionally, DNA-dependent RNA polymerase catalyzes the transcription of DNA into RNA using the four ribonucleoside triphosphates as substrates. In Borrelia turicatae (strain 91E135), this protein is DNA-directed RNA polymerase subunit beta'.